The chain runs to 904 residues: MRQGAPARGRRWFVVWALLGLTLGVLVASAAPSSPGTPGVAAATQAANGGPATPAPPAPGAPPTGDPKPKKNRKPKPPKPPRPAGDNATVAAGHATLREHLRDIKAENTDANFYVCPPPTGATVVQFEQPRRCPTRPEGQNYTEGIAVVFKENIAPYKFKATMYYKDVTVSQVWFGHRYSQFMGIFEDRAPVPFEEVIDKINAKGVCRSTAKYVRNNLETTAFHRDDHETDMELKPANAATRTSRGWHTTDLKYNPSRVEAFHRYGTTVNCIVEEVDARSVYPYDEFVLATGDFVYMSPFYGYREGSHTEHTSYAADRFKQVDGFYARDLTTKARATAPTTRNLLTTPKFTVAWDWVPKRPSVCTMTKWQEVDEMLRSEYGGSFRFSSDAISTTFTTNLTEYPLSRVDLGDCIGKDARDAMDRIFARRYNATHIKVGQPQYYLANGGFLIAYQPLLSNTLAELYVREHLREQSRKPPNPTPPPPGASANASVERIKTTSSIEFARLQFTYNHIQRHVNDMLGRVAIAWCELQNHELTLWNEARKLNPNAIASATVGRRVSARMLGDVMAVSTCVPVAADNVIVQNSMRISSRPGACYSRPLVSFRYEDQGPLVEGQLGENNELRLTRDAIEPCTVGHRRYFTFGGGYVYFEEYAYSHQLSRADITTVSTFIDLNITMLEDHEFVPLEVYTRHEIKDSGLLDYTEVQRRNQLHDLRFADIDTVIHADANAAMFAGLGAFFEGMGDLGRAVGKVVMGIVGGVVSAVSGVSSFMSNPFGALAVGLLVLAGLAAAFFAFRYVMRLQSNPMKALYPLTTKELKNPTNPDASGEGEEGGDFDEAKLAEAREMIRYMALVSAMERTEHKAKKKGTSALLSAKVTDMVMRKRRNTNYTQVPNKDGDADEDDL.

The N-terminal stretch at 1–30 (MRQGAPARGRRWFVVWALLGLTLGVLVASA) is a signal peptide. Positions 31 to 52 (APSSPGTPGVAAATQAANGGPA) are enriched in low complexity. A disordered region spans residues 31–88 (APSSPGTPGVAAATQAANGGPATPAPPAPGAPPTGDPKPKKNRKPKPPKPPRPAGDNA). Over 31-774 (APSSPGTPGV…SGVSSFMSNP (744 aa)) the chain is Virion surface. The segment covering 53–66 (TPAPPAPGAPPTGD) has biased composition (pro residues). The segment covering 70–79 (KKNRKPKPPK) has biased composition (basic residues). N-linked (GlcNAc...) asparagine; by host glycosylation is found at Asn-87 and Asn-141. 5 cysteine pairs are disulfide-bonded: Cys-116-Cys-573, Cys-133-Cys-529, Cys-207-Cys-271, Cys-364-Cys-412, and Cys-596-Cys-633. Involved in fusion and/or binding to host membrane stretches follow at residues 173-179 (VWFGHRY) and 258-265 (RVEAFHRY). Asn-398 and Asn-430 each carry an N-linked (GlcNAc...) asparagine; by host glycan. Positions 470–492 (REQSRKPPNPTPPPPGASANASV) are disordered. Residues 476-485 (PPNPTPPPPG) show a composition bias toward pro residues. The N-linked (GlcNAc...) asparagine; by host glycan is linked to Asn-489. Asn-674 carries an N-linked (GlcNAc...) asparagine; by host glycan. The segment at 719–772 (IDTVIHADANAAMFAGLGAFFEGMGDLGRAVGKVVMGIVGGVVSAVSGVSSFMS) is hydrophobic membrane proximal region. Residues 775-795 (FGALAVGLLVLAGLAAAFFAF) form a helical membrane-spanning segment. At 796–904 (RYVMRLQSNP…KDGDADEDDL (109 aa)) the chain is on the intravirion side. The Golgi targeting motif lies at 849-852 (YMAL). The segment at 883-904 (KRRNTNYTQVPNKDGDADEDDL) is disordered. The Internalization motif signature appears at 889-892 (YTQV).

This sequence belongs to the herpesviridae glycoprotein B family. As to quaternary structure, homotrimer; disulfide-linked. Interacts with host receptor MYH9/NMMHC-IIA. Interacts with host receptor MYH10/NMMHC-IIB. Binds to heparan sulfate proteoglycans. Interacts with gH/gL heterodimer. Interacts with host DEFA1, DEFA2 and DEFA3; these interactions inhibit viral infection. In terms of processing, the cytoplasmic tail is phosphorylated by the viral kinase US3. Phosphorylation may be linked to a down-regulation of gB expression on cell surface. Ubiquitinated.

The protein resides in the virion membrane. It is found in the host cell membrane. It localises to the host endosome membrane. The protein localises to the host Golgi apparatus membrane. Envelope glycoprotein that forms spikes at the surface of virion envelope and binds to the host cell entry receptors MYH9/NMMHC-IIA and MYH10/NMMHC-IIB, promoting the virus entry into host cells. Essential for the initial attachment to heparan sulfate moieties of the host cell surface proteoglycans. Involved in fusion of viral and cellular membranes leading to virus entry into the host cell: following initial binding to its host cell entry receptors, membrane fusion is mediated by the fusion machinery composed at least of gB and the heterodimer gH/gL. May be involved in the fusion between the virion envelope and the outer nuclear membrane during virion egress. Also plays a role, together with gK, in virus-induced cell-to-cell fusion (syncytia formation). This Homo sapiens (Human) protein is Envelope glycoprotein B.